Consider the following 337-residue polypeptide: GTP 3',8-cyclase (337 aa).

Residues 17–242 (TFQREYYYLR…RQKDRTDGPA (226 aa)) enclose the Radical SAM core domain. Arg26 provides a ligand contact to GTP. Residues Cys33 and Cys37 each coordinate [4Fe-4S] cluster. Tyr39 contributes to the S-adenosyl-L-methionine binding site. Position 40 (Cys40) interacts with [4Fe-4S] cluster. Arg76 lines the GTP pocket. An S-adenosyl-L-methionine-binding site is contributed by Gly80. Thr107 is a GTP binding site. Ser131 serves as a coordination point for S-adenosyl-L-methionine. Lys168 serves as a coordination point for GTP. Met202 serves as a coordination point for S-adenosyl-L-methionine. Residues Cys265 and Cys268 each coordinate [4Fe-4S] cluster. A GTP-binding site is contributed by 270-272 (RLR). Cys282 serves as a coordination point for [4Fe-4S] cluster.

Belongs to the radical SAM superfamily. MoaA family. In terms of assembly, monomer and homodimer. [4Fe-4S] cluster serves as cofactor.

The catalysed reaction is GTP + AH2 + S-adenosyl-L-methionine = (8S)-3',8-cyclo-7,8-dihydroguanosine 5'-triphosphate + 5'-deoxyadenosine + L-methionine + A + H(+). The protein operates within cofactor biosynthesis; molybdopterin biosynthesis. Catalyzes the cyclization of GTP to (8S)-3',8-cyclo-7,8-dihydroguanosine 5'-triphosphate. This Mannheimia succiniciproducens (strain KCTC 0769BP / MBEL55E) protein is GTP 3',8-cyclase.